Here is a 316-residue protein sequence, read N- to C-terminus: Dehydrogenase/reductase SDR family protein 7-like (316 aa).

The Cytoplasmic portion of the chain corresponds to 1–18 (MFFYKIIYFIGFPYIVLR). The helical; Signal-anchor for type II membrane protein transmembrane segment at 19–39 (LIVSIILPIASLYFIYCNFIA) threads the bilayer. Over 40-316 (PKLREKPESS…HKFASSSVKK (277 aa)) the chain is Peroxisomal. An NAD(+)-binding site is contributed by 56 to 80 (IITGASSGIGAELAKKYARLGCKVT). Residue Ser-194 participates in substrate binding. Tyr-207 acts as the Proton acceptor in catalysis.

Belongs to the short-chain dehydrogenases/reductases (SDR) family.

It localises to the peroxisome membrane. Putative oxidoreductase. This is Dehydrogenase/reductase SDR family protein 7-like from Dictyostelium discoideum (Social amoeba).